The sequence spans 515 residues: Endoglucanase 23 (515 aa).

The first 29 residues, 1–29 (MALLSAPVRRRRSRVRVLLVCCCLLLALA), serve as a signal peptide directing secretion. Residue aspartate 95 is the Nucleophile of the active site. N-linked (GlcNAc...) asparagine glycans are attached at residues asparagine 178, asparagine 375, and asparagine 384. Histidine 426 is an active-site residue. Asparagine 452 carries an N-linked (GlcNAc...) asparagine glycan. Active-site residues include aspartate 477 and glutamate 486.

The protein belongs to the glycosyl hydrolase 9 (cellulase E) family.

The protein resides in the secreted. It carries out the reaction Endohydrolysis of (1-&gt;4)-beta-D-glucosidic linkages in cellulose, lichenin and cereal beta-D-glucans.. This chain is Endoglucanase 23 (GLU12), found in Oryza sativa subsp. japonica (Rice).